Consider the following 220-residue polypeptide: Deoxyribose-phosphate aldolase 2 (220 aa).

D89 acts as the Proton donor/acceptor in catalysis. K151 (schiff-base intermediate with acetaldehyde) is an active-site residue. The Proton donor/acceptor role is filled by K180.

Belongs to the DeoC/FbaB aldolase family. DeoC type 1 subfamily.

The protein resides in the cytoplasm. It carries out the reaction 2-deoxy-D-ribose 5-phosphate = D-glyceraldehyde 3-phosphate + acetaldehyde. It participates in carbohydrate degradation; 2-deoxy-D-ribose 1-phosphate degradation; D-glyceraldehyde 3-phosphate and acetaldehyde from 2-deoxy-alpha-D-ribose 1-phosphate: step 2/2. Catalyzes a reversible aldol reaction between acetaldehyde and D-glyceraldehyde 3-phosphate to generate 2-deoxy-D-ribose 5-phosphate. The chain is Deoxyribose-phosphate aldolase 2 from Staphylococcus aureus (strain MRSA252).